A 147-amino-acid chain; its full sequence is Large ribosomal subunit protein bL9 (147 aa).

It belongs to the bacterial ribosomal protein bL9 family.

Functionally, binds to the 23S rRNA. This chain is Large ribosomal subunit protein bL9, found in Campylobacter jejuni subsp. jejuni serotype O:23/36 (strain 81-176).